Consider the following 318-residue polypeptide: Ribokinase (318 aa).

Residues 12-14 (NWD), 40-44 (GKAAN), and Glu141 each bind substrate. ATP-binding positions include Asn188 and 235 to 240 (TLGGNG). Residues Asp264 and Ser266 each contribute to the K(+) site. ATP is bound at residue 269 to 270 (GD). Asp270 contacts substrate. Catalysis depends on Asp270, which acts as the Proton acceptor. K(+) contacts are provided by Ser301, Arg304, Gly306, and Ser310.

Belongs to the carbohydrate kinase PfkB family. Ribokinase subfamily. As to quaternary structure, homodimer. Mg(2+) is required as a cofactor.

It localises to the cytoplasm. The protein resides in the nucleus. It carries out the reaction D-ribose + ATP = D-ribose 5-phosphate + ADP + H(+). Its pathway is carbohydrate metabolism; D-ribose degradation; D-ribose 5-phosphate from beta-D-ribopyranose: step 2/2. Activated by a monovalent cation that binds near, but not in, the active site. The most likely occupant of the site in vivo is potassium. Ion binding induces a conformational change that may alter substrate affinity. Functionally, catalyzes the phosphorylation of ribose at O-5 in a reaction requiring ATP and magnesium. The resulting D-ribose-5-phosphate can then be used either for sythesis of nucleotides, histidine, and tryptophan, or as a component of the pentose phosphate pathway. The chain is Ribokinase (rbsk) from Dictyostelium discoideum (Social amoeba).